A 282-amino-acid chain; its full sequence is Transcription repressor OFP18 (282 aa).

The interval 1–85 (MVRKMKLPFL…YSSFSSTSHA (85 aa)) is disordered. Positions 15 to 35 (SSSSFSSNSSSSSSSWPWPSS) are enriched in low complexity. A compositionally biased stretch (polar residues) spans 36–47 (HQQNLKTISSKA). The segment covering 66–85 (SFSSSPSSSSYSSFSSTSHA) has biased composition (low complexity). The OVATE domain maps to 139-199 (LSLESNDPYT…FAAFVDLVLN (61 aa)).

As to expression, expressed in roots and shoots.

Its subcellular location is the nucleus. Its function is as follows. Transcriptional repressor that regulates multiple aspects of plant growth and development through the regulation of BEL1-LIKE (BLH) and KNOX TALE (KNAT) homeodomain transcription factors. In Arabidopsis thaliana (Mouse-ear cress), this protein is Transcription repressor OFP18 (OFP18).